The primary structure comprises 196 residues: Thymidine kinase (196 aa).

ATP-binding positions include 9–16 and 88–91; these read SAMNAGKS and DEAQ. The Proton acceptor role is filled by Glu-89. Residues Cys-146, Cys-148, Cys-183, and His-186 each coordinate Zn(2+).

This sequence belongs to the thymidine kinase family. As to quaternary structure, homotetramer.

The protein resides in the cytoplasm. It carries out the reaction thymidine + ATP = dTMP + ADP + H(+). This Coxiella burnetii (strain RSA 493 / Nine Mile phase I) protein is Thymidine kinase.